The following is a 427-amino-acid chain: Probable threonylcarbamoyladenosine tRNA methylthiotransferase (427 aa).

In terms of domain architecture, MTTase N-terminal spans 12-118; that stretch reads MRVYVEGYGC…AGEILKNYVE (107 aa). [4Fe-4S] cluster is bound by residues C21, C57, C86, C155, C159, and C162. Positions 141-370 constitute a Radical SAM core domain; the sequence is LKPSLITPLP…DKLRRELSYL (230 aa). A TRAM domain is found at 373 to 427; it reads KKYIGKAMKVLVLDEGKGYTDNFKVVKFEGGEVGEFRKVKITDAKTFGLKGELIL.

It belongs to the methylthiotransferase family. CDKAL1 subfamily. [4Fe-4S] cluster serves as cofactor.

The enzyme catalyses N(6)-L-threonylcarbamoyladenosine(37) in tRNA + (sulfur carrier)-SH + AH2 + 2 S-adenosyl-L-methionine = 2-methylsulfanyl-N(6)-L-threonylcarbamoyladenosine(37) in tRNA + (sulfur carrier)-H + 5'-deoxyadenosine + L-methionine + A + S-adenosyl-L-homocysteine + 2 H(+). Its function is as follows. Catalyzes the methylthiolation of N6-threonylcarbamoyladenosine (t(6)A), leading to the formation of 2-methylthio-N6-threonylcarbamoyladenosine (ms(2)t(6)A) at position 37 in tRNAs that read codons beginning with adenine. This Methanocaldococcus jannaschii (strain ATCC 43067 / DSM 2661 / JAL-1 / JCM 10045 / NBRC 100440) (Methanococcus jannaschii) protein is Probable threonylcarbamoyladenosine tRNA methylthiotransferase.